The chain runs to 288 residues: MSQISAKAVKELRDKTGVGMMDCKKALDESGGDMQKAVEYLRKKGAALAAKRAEREASEGVVIVKINDAADTGIILELNCETDFVARGDDFTGFADTIAQTALDGSVDSAEKMMGVSLGEAYDGEKVEDAIKTMTGKLGEKIQLKRLAYVRSEGGLVAGYVHPGSKLGSIVELSGGNSAEAVVLAKDIAMQVAAATPIVVDRSSVPAEYIEKEKEIYRQQALAQGKPEKFVDKIITGRLEKYFQEEVLLEQAYIKDSNTKVSDVLHEFTKQYDMPITVNSFIRYQLGA.

The interval 82–85 (TDFV) is involved in Mg(2+) ion dislocation from EF-Tu.

The protein belongs to the EF-Ts family.

Its subcellular location is the cytoplasm. Its function is as follows. Associates with the EF-Tu.GDP complex and induces the exchange of GDP to GTP. It remains bound to the aminoacyl-tRNA.EF-Tu.GTP complex up to the GTP hydrolysis stage on the ribosome. This is Elongation factor Ts from Chlorobium phaeobacteroides (strain BS1).